A 384-amino-acid polypeptide reads, in one-letter code: L-aspartate decarboxylase (384 aa).

K231 carries the N6-(pyridoxal phosphate)lysine modification.

This sequence belongs to the group II decarboxylase family. MfnA subfamily. Homodimer. Can also form homohexamers. Pyridoxal 5'-phosphate serves as cofactor.

The catalysed reaction is L-aspartate + H(+) = beta-alanine + CO2. Its pathway is cofactor biosynthesis; coenzyme A biosynthesis. With respect to regulation, inhibited by hydroxylamine. Catalyzes the decarboxylation of L-aspartate to produce beta-alanine. In vitro, can also catalyze the decarboxylation of L-glutamate to produce 4-aminobutanoate, but this activity does not seem necessary in vivo. Shows much higher activity with L-aspartate than with L-glutamate. Does not decarboxylate L-tyrosine. The sequence is that of L-aspartate decarboxylase from Thermococcus kodakarensis (strain ATCC BAA-918 / JCM 12380 / KOD1) (Pyrococcus kodakaraensis (strain KOD1)).